The following is a 325-amino-acid chain: Delta(1)-pyrroline-2-carboxylate reductase (325 aa).

The protein belongs to the ornithine cyclodeaminase/mu-crystallin family.

The catalysed reaction is L-proline + NAD(+) = 1-pyrroline-2-carboxylate + NADH + H(+). It carries out the reaction L-proline + NADP(+) = 1-pyrroline-2-carboxylate + NADPH + H(+). Catalyzes the reduction of Delta(1)-pyrroline-2-carboxylate (Pyr2C) to L-proline, using preferentially NADPH over NADH as the electron donor. Is likely involved in a degradation pathway that converts trans-3-hydroxy-L-proline (t3LHyp) to L-proline. In Bacillus thuringiensis subsp. konkukian (strain 97-27), this protein is Delta(1)-pyrroline-2-carboxylate reductase.